A 295-amino-acid chain; its full sequence is Ribosomal RNA small subunit methyltransferase A (295 aa).

The S-adenosyl-L-methionine site is built by Asn-25, Leu-27, Gly-52, Glu-73, Asp-98, and Asn-120.

The protein belongs to the class I-like SAM-binding methyltransferase superfamily. rRNA adenine N(6)-methyltransferase family. RsmA subfamily.

The protein localises to the cytoplasm. It carries out the reaction adenosine(1518)/adenosine(1519) in 16S rRNA + 4 S-adenosyl-L-methionine = N(6)-dimethyladenosine(1518)/N(6)-dimethyladenosine(1519) in 16S rRNA + 4 S-adenosyl-L-homocysteine + 4 H(+). Functionally, specifically dimethylates two adjacent adenosines (A1518 and A1519) in the loop of a conserved hairpin near the 3'-end of 16S rRNA in the 30S particle. May play a critical role in biogenesis of 30S subunits. The polypeptide is Ribosomal RNA small subunit methyltransferase A (Desulfotalea psychrophila (strain LSv54 / DSM 12343)).